The sequence spans 21 residues: Maculatin-1.1 (21 aa).

The residue at position 21 (phenylalanine 21) is a Phenylalanine amide.

As to expression, expressed by the skin dorsal glands.

It localises to the secreted. Maculatin-1.1 shows significant antibacterial activity against Gram-positive bacteria, less against Gram-negative bacteria. Maculatin-1.1.1 is inactive. This is Maculatin-1.1 from Ranoidea genimaculata (Brown-spotted tree frog).